Consider the following 768-residue polypeptide: Multidomain esterase (768 aa).

A signal peptide spans 1–40 (MKKHFVVGETIKRFLRIGTSLALSISTLSLLPSAPRLSSA). An acetylxylan esterase region spans residues 41–264 (AGTIKIMPLG…YWLEQIEGYL (224 aa)). Ser68 (nucleophile; for acetylxylan esterase activity) is an active-site residue. Residues Asp240 and His243 each act as for acetylxylan esterase activity in the active site. Positions 267-283 (SDGPQQTQPTQPSQGDS) are enriched in low complexity. Positions 267 to 289 (SDGPQQTQPTQPSQGDSGPELIY) are disordered. The region spanning 285–352 (PELIYGDLDG…IIGKIKEFTV (68 aa)) is the Dockerin domain. Residues 353 to 768 (AEKTVTEKPV…ADTFASKWLY (416 aa)) form a glucuronoyl esterase region. The short motif at 563 to 568 (GVSRYG) is the GXSYXG catalytic site motif element. Ser565 serves as the catalytic Nucleophile; for glucuronoyl esterase activity. Residues Lys569, Glu633, and Trp679 each contribute to the substrate site.

It in the N-terminal section; belongs to the carbohydrate esterase 3 (CE3) family. This sequence in the C-terminal section; belongs to the carbohydrate esterase 15 (CE15) family.

The protein localises to the secreted. It catalyses the reaction Deacetylation of xylans and xylo-oligosaccharides.. It carries out the reaction a 4-O-methyl-alpha-D-glucuronosyl ester derivative + H2O = 4-O-methyl-alpha-D-glucuronate derivative + an alcohol + H(+). It functions in the pathway glycan degradation; xylan degradation. Its function is as follows. Esterase involved in the degradation of plant cell wall polysaccharides. Catalyzes the deacetylation of chemically acetylated xylan and native, steam-extracted xylan. Seems to act in synergy with the xylanase XynD which produces xylo-oligosaccharides. Also catalyzes the deesterification of methyl esters of 4-O-methyl-D-glucuronic acid (MeGlcA) side residues in synthetic glucuronoxylan methyl ester, suggesting that it may be able to cleave ester linkages between MeGlcA carboxyl and more complex alcohols, including linkages between hemicellulose and lignin alcohols in plant cell walls. This chain is Multidomain esterase, found in Ruminococcus flavefaciens.